Here is a 224-residue protein sequence, read N- to C-terminus: ATP-dependent dethiobiotin synthetase BioD (224 aa).

Thr18 provides a ligand contact to Mg(2+). Lys39 is a catalytic residue. Position 43 (Ser43) interacts with substrate. Residues Asp56 and Glu117 each contribute to the Mg(2+) site. ATP-binding positions include Asp56, 117 to 120, and 177 to 178; these read EGVG and NE.

This sequence belongs to the dethiobiotin synthetase family. Homodimer. The cofactor is Mg(2+).

It is found in the cytoplasm. The enzyme catalyses (7R,8S)-7,8-diammoniononanoate + CO2 + ATP = (4R,5S)-dethiobiotin + ADP + phosphate + 3 H(+). It functions in the pathway cofactor biosynthesis; biotin biosynthesis; biotin from 7,8-diaminononanoate: step 1/2. Its function is as follows. Catalyzes a mechanistically unusual reaction, the ATP-dependent insertion of CO2 between the N7 and N8 nitrogen atoms of 7,8-diaminopelargonic acid (DAPA, also called 7,8-diammoniononanoate) to form a ureido ring. This Xanthomonas oryzae pv. oryzae (strain MAFF 311018) protein is ATP-dependent dethiobiotin synthetase BioD.